Consider the following 103-residue polypeptide: Integration host factor subunit beta (103 aa).

The tract at residues 62-81 (RNPKTGESVALPGKHVPHFK) is disordered.

It belongs to the bacterial histone-like protein family. As to quaternary structure, heterodimer of an alpha and a beta chain.

In terms of biological role, this protein is one of the two subunits of integration host factor, a specific DNA-binding protein that functions in genetic recombination as well as in transcriptional and translational control. The chain is Integration host factor subunit beta from Xanthomonas axonopodis pv. citri (strain 306).